We begin with the raw amino-acid sequence, 200 residues long: Small ribosomal subunit protein uS4 (200 aa).

Residues 106-170 (RRLQTIVFKK…SPIANELHPI (65 aa)) enclose the S4 RNA-binding domain. The interval 178 to 200 (AERVKEEAEKEAAASEDGGEQDE) is disordered. Positions 179–190 (ERVKEEAEKEAA) are enriched in basic and acidic residues.

It belongs to the universal ribosomal protein uS4 family. Part of the 30S ribosomal subunit. Contacts protein S5. The interaction surface between S4 and S5 is involved in control of translational fidelity.

One of the primary rRNA binding proteins, it binds directly to 16S rRNA where it nucleates assembly of the body of the 30S subunit. In terms of biological role, with S5 and S12 plays an important role in translational accuracy. This Thermoplasma volcanium (strain ATCC 51530 / DSM 4299 / JCM 9571 / NBRC 15438 / GSS1) protein is Small ribosomal subunit protein uS4.